A 354-amino-acid polypeptide reads, in one-letter code: Protein ECM8 (354 aa).

In terms of biological role, may be involved in cell wall organization and biogenesis. The protein is Protein ECM8 (ECM8) of Saccharomyces cerevisiae (strain ATCC 204508 / S288c) (Baker's yeast).